A 428-amino-acid chain; its full sequence is GTPase Obg (428 aa).

Residues 1-158 (MFVDKVKVYA…RNLLLELKVL (158 aa)) enclose the Obg domain. The region spanning 159–329 (ADVGLVGFPS…LMLAIADELE (171 aa)) is the OBG-type G domain. GTP-binding positions include 165–172 (GFPSVGKS), 190–194 (FTTIT), 212–215 (DLPG), 282–285 (NKMD), and 310–312 (SAI). Mg(2+) is bound by residues serine 172 and threonine 192. An OCT domain is found at 350–428 (KHELPIEPFT…IMKFEFEFVE (79 aa)).

Belongs to the TRAFAC class OBG-HflX-like GTPase superfamily. OBG GTPase family. Monomer. Mg(2+) serves as cofactor.

Its subcellular location is the cytoplasm. In terms of biological role, an essential GTPase which binds GTP, GDP and possibly (p)ppGpp with moderate affinity, with high nucleotide exchange rates and a fairly low GTP hydrolysis rate. Plays a role in control of the cell cycle, stress response, ribosome biogenesis and in those bacteria that undergo differentiation, in morphogenesis control. This chain is GTPase Obg, found in Shouchella clausii (strain KSM-K16) (Alkalihalobacillus clausii).